Reading from the N-terminus, the 102-residue chain is Large ribosomal subunit protein uL24 (102 aa).

Belongs to the universal ribosomal protein uL24 family. Part of the 50S ribosomal subunit.

Its function is as follows. One of two assembly initiator proteins, it binds directly to the 5'-end of the 23S rRNA, where it nucleates assembly of the 50S subunit. One of the proteins that surrounds the polypeptide exit tunnel on the outside of the subunit. The chain is Large ribosomal subunit protein uL24 from Paraburkholderia phytofirmans (strain DSM 17436 / LMG 22146 / PsJN) (Burkholderia phytofirmans).